The following is a 291-amino-acid chain: Energy-coupling factor transporter ATP-binding protein EcfA2 (291 aa).

The ABC transporter domain maps to 3–246 (ITFKDVSYTY…PEWLTSKQLG (244 aa)). 40–47 (GHTGSGKS) provides a ligand contact to ATP.

It belongs to the ABC transporter superfamily. Energy-coupling factor EcfA family. In terms of assembly, forms a stable energy-coupling factor (ECF) transporter complex composed of 2 membrane-embedded substrate-binding proteins (S component), 2 ATP-binding proteins (A component) and 2 transmembrane proteins (T component).

It localises to the cell membrane. Functionally, ATP-binding (A) component of a common energy-coupling factor (ECF) ABC-transporter complex. Unlike classic ABC transporters this ECF transporter provides the energy necessary to transport a number of different substrates. The sequence is that of Energy-coupling factor transporter ATP-binding protein EcfA2 from Latilactobacillus sakei subsp. sakei (strain 23K) (Lactobacillus sakei subsp. sakei).